The following is a 280-amino-acid chain: 4-diphosphocytidyl-2-C-methyl-D-erythritol kinase (280 aa).

The active site involves Lys-8. ATP is bound at residue 91 to 101 (PVAAGLAGGSS). Asp-133 is a catalytic residue.

This sequence belongs to the GHMP kinase family. IspE subfamily.

It catalyses the reaction 4-CDP-2-C-methyl-D-erythritol + ATP = 4-CDP-2-C-methyl-D-erythritol 2-phosphate + ADP + H(+). The protein operates within isoprenoid biosynthesis; isopentenyl diphosphate biosynthesis via DXP pathway; isopentenyl diphosphate from 1-deoxy-D-xylulose 5-phosphate: step 3/6. Its function is as follows. Catalyzes the phosphorylation of the position 2 hydroxy group of 4-diphosphocytidyl-2C-methyl-D-erythritol. This is 4-diphosphocytidyl-2-C-methyl-D-erythritol kinase from Clostridium kluyveri (strain NBRC 12016).